The sequence spans 203 residues: Putative zinc finger protein 876 (203 aa).

C2H2-type zinc fingers lie at residues 63–85 (YTCEECGKAFYRSSHLTEHKNIH), 91–113 (YKCEECGNAFYRSSHLTKHKRIH), 119–141 (YKCEECGKAFRQSSALNEHKKIH), and 147–169 (YKCKECGKAFRWSRSLNEHTNIH). Residues 175–197 (YTCEECGKDFTWSSTLTVHQRIQ) form a C2H2-type 5; degenerate zinc finger.

The protein belongs to the krueppel C2H2-type zinc-finger protein family.

It localises to the nucleus. Functionally, may be involved in transcriptional regulation. The chain is Putative zinc finger protein 876 (ZNF876P) from Homo sapiens (Human).